Consider the following 357-residue polypeptide: UDP-N-acetylglucosamine--N-acetylmuramyl-(pentapeptide) pyrophosphoryl-undecaprenol N-acetylglucosamine transferase (357 aa).

UDP-N-acetyl-alpha-D-glucosamine-binding positions include 11-13 (TGG), Asn123, Arg159, Ser187, Ile241, 260-265 (ALTVAE), and Gln286.

Belongs to the glycosyltransferase 28 family. MurG subfamily.

It localises to the cell inner membrane. It catalyses the reaction di-trans,octa-cis-undecaprenyl diphospho-N-acetyl-alpha-D-muramoyl-L-alanyl-D-glutamyl-meso-2,6-diaminopimeloyl-D-alanyl-D-alanine + UDP-N-acetyl-alpha-D-glucosamine = di-trans,octa-cis-undecaprenyl diphospho-[N-acetyl-alpha-D-glucosaminyl-(1-&gt;4)]-N-acetyl-alpha-D-muramoyl-L-alanyl-D-glutamyl-meso-2,6-diaminopimeloyl-D-alanyl-D-alanine + UDP + H(+). Its pathway is cell wall biogenesis; peptidoglycan biosynthesis. Cell wall formation. Catalyzes the transfer of a GlcNAc subunit on undecaprenyl-pyrophosphoryl-MurNAc-pentapeptide (lipid intermediate I) to form undecaprenyl-pyrophosphoryl-MurNAc-(pentapeptide)GlcNAc (lipid intermediate II). The chain is UDP-N-acetylglucosamine--N-acetylmuramyl-(pentapeptide) pyrophosphoryl-undecaprenol N-acetylglucosamine transferase from Aromatoleum aromaticum (strain DSM 19018 / LMG 30748 / EbN1) (Azoarcus sp. (strain EbN1)).